A 203-amino-acid polypeptide reads, in one-letter code: 2-phospho-L-lactate guanylyltransferase (203 aa).

It belongs to the CofC family. In terms of assembly, homodimer.

The enzyme catalyses (2S)-2-phospholactate + GTP + H(+) = (2S)-lactyl-2-diphospho-5'-guanosine + diphosphate. The protein operates within cofactor biosynthesis; coenzyme F420 biosynthesis. Guanylyltransferase that catalyzes the activation of (2S)-2-phospholactate (2-PL) as (2S)-lactyl-2-diphospho-5'-guanosine, via the condensation of 2-PL with GTP. It is involved in the biosynthesis of coenzyme F420, a hydride carrier cofactor. The sequence is that of 2-phospho-L-lactate guanylyltransferase from Halomicrobium mukohataei (strain ATCC 700874 / DSM 12286 / JCM 9738 / NCIMB 13541) (Haloarcula mukohataei).